Consider the following 291-residue polypeptide: NAD kinase (291 aa).

Residue D73 is the Proton acceptor of the active site. NAD(+) is bound by residues 73-74 (DG), 147-148 (ND), R175, D177, 188-193 (TAYALS), A212, and Q246.

It belongs to the NAD kinase family. A divalent metal cation is required as a cofactor.

Its subcellular location is the cytoplasm. It catalyses the reaction NAD(+) + ATP = ADP + NADP(+) + H(+). In terms of biological role, involved in the regulation of the intracellular balance of NAD and NADP, and is a key enzyme in the biosynthesis of NADP. Catalyzes specifically the phosphorylation on 2'-hydroxyl of the adenosine moiety of NAD to yield NADP. The sequence is that of NAD kinase from Polaromonas sp. (strain JS666 / ATCC BAA-500).